The sequence spans 359 residues: WAT1-related protein At5g64700 (359 aa).

Helical transmembrane passes span 10–30, 37–57, 66–86, 100–120, 135–155, 186–206, 218–238, 256–276, 282–302, and 306–326; these read LMVT…KAVF, FVFV…LAFF, LSFV…TLSL, LAAA…LLFG, LVGI…KGPL, WLKG…WLVL, LYFT…IAIA, AVIY…SWVI, VFLS…SAIL, and IISL…YCVL. EamA domains lie at 18 to 136 and 198 to 326; these read IYTI…AKLV and ILWG…YCVL.

The protein belongs to the drug/metabolite transporter (DMT) superfamily. Plant drug/metabolite exporter (P-DME) (TC 2.A.7.4) family.

The protein localises to the membrane. The protein is WAT1-related protein At5g64700 of Arabidopsis thaliana (Mouse-ear cress).